A 298-amino-acid polypeptide reads, in one-letter code: Apolipoprotein E (298 aa).

A signal peptide spans M1–A18. 6 repeat units span residues L74–A95, P96–R117, A118–G139, Q140–L161, R162–E183, and G223–E244. Residues L74–E244 are 8 X 22 AA approximate tandem repeats. Methionine sulfoxide is present on M137. S141 carries the post-translational modification Phosphoserine. The interval H152–R162 is LDL and other lipoprotein receptors binding. Position 156–159 (L156–R159) interacts with heparin. A lipid-binding and lipoprotein association region spans residues S204–M272. Position 218-225 (G218–L225) interacts with heparin. A specificity for association with VLDL region spans residues R260–M272.

The protein belongs to the apolipoprotein A1/A4/E family. In terms of assembly, homotetramer. May interact with ABCA1; functionally associated with ABCA1 in the biogenesis of HDLs. May interact with APP/A4 amyloid-beta peptide; the interaction is extremely stable in vitro but its physiological significance is unclear. May interact with MAPT. May interact with MAP2. In the cerebrospinal fluid, interacts with secreted SORL1. Interacts with PMEL; this allows the loading of PMEL luminal fragment on ILVs to induce fibril nucleation. Post-translationally, APOE exists as multiple glycosylated and sialylated glycoforms within cells and in plasma. The extent of glycosylation and sialylation are tissue and context specific. In terms of processing, glycated in plasma VLDL. Phosphorylated by FAM20C in the extracellular medium.

It localises to the secreted. The protein resides in the extracellular space. It is found in the extracellular matrix. The protein localises to the extracellular vesicle. Its subcellular location is the endosome. It localises to the multivesicular body. In terms of biological role, APOE is an apolipoprotein, a protein associating with lipid particles, that mainly functions in lipoprotein-mediated lipid transport between organs via the plasma and interstitial fluids. APOE is a core component of plasma lipoproteins and is involved in their production, conversion and clearance. Apolipoproteins are amphipathic molecules that interact both with lipids of the lipoprotein particle core and the aqueous environment of the plasma. As such, APOE associates with chylomicrons, chylomicron remnants, very low density lipoproteins (VLDL) and intermediate density lipoproteins (IDL) but shows a preferential binding to high-density lipoproteins (HDL). It also binds a wide range of cellular receptors including the LDL receptor/LDLR, the LDL receptor-related proteins LRP1, LRP2 and LRP8 and the very low-density lipoprotein receptor/VLDLR that mediate the cellular uptake of the APOE-containing lipoprotein particles. Finally, APOE also has a heparin-binding activity and binds heparan-sulfate proteoglycans on the surface of cells, a property that supports the capture and the receptor-mediated uptake of APOE-containing lipoproteins by cells. A main function of APOE is to mediate lipoprotein clearance through the uptake of chylomicrons, VLDLs, and HDLs by hepatocytes. APOE is also involved in the biosynthesis by the liver of VLDLs as well as their uptake by peripheral tissues ensuring the delivery of triglycerides and energy storage in muscle, heart and adipose tissues. By participating in the lipoprotein-mediated distribution of lipids among tissues, APOE plays a critical role in plasma and tissues lipid homeostasis. APOE is also involved in two steps of reverse cholesterol transport, the HDLs-mediated transport of cholesterol from peripheral tissues to the liver, and thereby plays an important role in cholesterol homeostasis. First, it is functionally associated with ABCA1 in the biogenesis of HDLs in tissues. Second, it is enriched in circulating HDLs and mediates their uptake by hepatocytes. APOE also plays an important role in lipid transport in the central nervous system, regulating neuron survival and sprouting. In Dasyprocta punctata (Central American agouti), this protein is Apolipoprotein E (APOE).